The following is a 363-amino-acid chain: Phosphoribosylformylglycinamidine cyclo-ligase (363 aa).

This sequence belongs to the AIR synthase family.

It localises to the cytoplasm. The catalysed reaction is 2-formamido-N(1)-(5-O-phospho-beta-D-ribosyl)acetamidine + ATP = 5-amino-1-(5-phospho-beta-D-ribosyl)imidazole + ADP + phosphate + H(+). It participates in purine metabolism; IMP biosynthesis via de novo pathway; 5-amino-1-(5-phospho-D-ribosyl)imidazole from N(2)-formyl-N(1)-(5-phospho-D-ribosyl)glycinamide: step 2/2. The polypeptide is Phosphoribosylformylglycinamidine cyclo-ligase (Bartonella tribocorum (strain CIP 105476 / IBS 506)).